A 574-amino-acid polypeptide reads, in one-letter code: Isocitrate dehydrogenase kinase/phosphatase (574 aa).

ATP is bound by residues 315–321 (APGIRGM) and K336. D371 is a catalytic residue.

Belongs to the AceK family.

The protein localises to the cytoplasm. The catalysed reaction is L-seryl-[isocitrate dehydrogenase] + ATP = O-phospho-L-seryl-[isocitrate dehydrogenase] + ADP + H(+). Bifunctional enzyme which can phosphorylate or dephosphorylate isocitrate dehydrogenase (IDH) on a specific serine residue. This is a regulatory mechanism which enables bacteria to bypass the Krebs cycle via the glyoxylate shunt in response to the source of carbon. When bacteria are grown on glucose, IDH is fully active and unphosphorylated, but when grown on acetate or ethanol, the activity of IDH declines drastically concomitant with its phosphorylation. The sequence is that of Isocitrate dehydrogenase kinase/phosphatase from Escherichia coli O127:H6 (strain E2348/69 / EPEC).